The sequence spans 278 residues: Formyltetrahydrofolate deformylase (278 aa).

The ACT domain occupies 6-85 (ILLTDCPDDK…RLIGTQRKRI (80 aa)). Residue D223 is part of the active site.

The protein belongs to the PurU family.

It carries out the reaction (6R)-10-formyltetrahydrofolate + H2O = (6S)-5,6,7,8-tetrahydrofolate + formate + H(+). It functions in the pathway purine metabolism; IMP biosynthesis via de novo pathway; formate from 10-formyl-5,6,7,8-tetrahydrofolate: step 1/1. Catalyzes the hydrolysis of 10-formyltetrahydrofolate (formyl-FH4) to formate and tetrahydrofolate (FH4). The polypeptide is Formyltetrahydrofolate deformylase (Haemophilus influenzae (strain ATCC 51907 / DSM 11121 / KW20 / Rd)).